The sequence spans 200 residues: Glutathione S-transferase domain-containing protein DDB_G0273153/DDB_G0273923 (200 aa).

The region spanning 1 to 71 (MISSIYIFKI…YISNNHNFSG (71 aa)) is the GST N-terminal domain. A GST C-terminal domain is found at 73–195 (SLQESARVDD…INSNNINSQS (123 aa)).

This sequence belongs to the GST superfamily.

This is Glutathione S-transferase domain-containing protein DDB_G0273153/DDB_G0273923 from Dictyostelium discoideum (Social amoeba).